A 218-amino-acid polypeptide reads, in one-letter code: NAD(P)H-quinone oxidoreductase subunit U, chloroplastic (218 aa).

A chloroplast-targeting transit peptide spans 1–53 (MASLSTITQPSLVHIPGESVLHHVPSTCSFPWKPTINTKRIICSPARNSSEVS). The disordered stretch occupies residues 47–72 (RNSSEVSAEAETEGGSSTAVDEAPKE). The 65-residue stretch at 95-159 (DHYGRLGIFR…EERRMYDWSL (65 aa)) folds into the J domain. Residues 197–217 (ILGYFIGAWLVLGVALSVAFN) traverse the membrane as a helical segment.

In terms of assembly, part of the chloroplast NDH complex, composed of a mixture of chloroplast and nucleus encoded subunits. Component of the electron donor-binding subcomplex, at least composed of NDHS, NDHT and NDHU.

The protein localises to the plastid. It is found in the chloroplast thylakoid membrane. It catalyses the reaction a plastoquinone + NADH + (n+1) H(+)(in) = a plastoquinol + NAD(+) + n H(+)(out). It carries out the reaction a plastoquinone + NADPH + (n+1) H(+)(in) = a plastoquinol + NADP(+) + n H(+)(out). Its function is as follows. NDH shuttles electrons from NAD(P)H:plastoquinone, via FMN and iron-sulfur (Fe-S) centers, to quinones in the photosynthetic chain and possibly in a chloroplast respiratory chain. The immediate electron acceptor for the enzyme in this species is believed to be plastoquinone. Couples the redox reaction to proton translocation, and thus conserves the redox energy in a proton gradient. This is NAD(P)H-quinone oxidoreductase subunit U, chloroplastic from Arabidopsis thaliana (Mouse-ear cress).